Reading from the N-terminus, the 1092-residue chain is DNA polymerase II large subunit (1092 aa).

It belongs to the archaeal DNA polymerase II family. Heterodimer of a large subunit and a small subunit.

The enzyme catalyses DNA(n) + a 2'-deoxyribonucleoside 5'-triphosphate = DNA(n+1) + diphosphate. It catalyses the reaction Exonucleolytic cleavage in the 3'- to 5'-direction to yield nucleoside 5'-phosphates.. Its function is as follows. Possesses two activities: a DNA synthesis (polymerase) and an exonucleolytic activity that degrades single-stranded DNA in the 3'- to 5'-direction. Has a template-primer preference which is characteristic of a replicative DNA polymerase. This Methanothermobacter thermautotrophicus (strain ATCC 29096 / DSM 1053 / JCM 10044 / NBRC 100330 / Delta H) (Methanobacterium thermoautotrophicum) protein is DNA polymerase II large subunit (polC).